The chain runs to 175 residues: Protein-export protein SecB (175 aa).

Polar residues predominate over residues 153–163 (QQQPDAANGND). Residues 153–175 (QQQPDAANGNDSGIILPPGATRQ) form a disordered region.

Belongs to the SecB family. Homotetramer, a dimer of dimers. One homotetramer interacts with 1 SecA dimer.

The protein resides in the cytoplasm. Its function is as follows. One of the proteins required for the normal export of preproteins out of the cell cytoplasm. It is a molecular chaperone that binds to a subset of precursor proteins, maintaining them in a translocation-competent state. It also specifically binds to its receptor SecA. This is Protein-export protein SecB from Bordetella bronchiseptica (strain ATCC BAA-588 / NCTC 13252 / RB50) (Alcaligenes bronchisepticus).